The primary structure comprises 226 residues: Phosphoglycolate phosphatase (226 aa).

Asp-9 functions as the Nucleophile in the catalytic mechanism. Asp-9 and Asp-11 together coordinate Mg(2+). Position 150 (Lys-150) interacts with substrate. Mg(2+)-binding residues include Asp-173 and Asp-177.

Belongs to the archaeal SPP-like hydrolase family. The cofactor is Mg(2+).

The enzyme catalyses 2-phosphoglycolate + H2O = glycolate + phosphate. Catalyzes the dephosphorylation of 2-phosphoglycolate. In Methanococcoides burtonii (strain DSM 6242 / NBRC 107633 / OCM 468 / ACE-M), this protein is Phosphoglycolate phosphatase.